The sequence spans 243 residues: UPF0758 protein MAE_44350 (243 aa).

The region spanning 113-235 (VIDSPDTAAA…FQSLRQITDL (123 aa)) is the MPN domain. Residues His-184, His-186, and Asp-197 each coordinate Zn(2+). Residues 184 to 197 (HNHPTGSLVPSQDD) carry the JAMM motif motif.

It belongs to the UPF0758 family.

The protein is UPF0758 protein MAE_44350 of Microcystis aeruginosa (strain NIES-843 / IAM M-2473).